The chain runs to 344 residues: Glycerol-3-phosphate dehydrogenase [NAD(P)+] (344 aa).

NADPH-binding residues include tryptophan 11, arginine 31, arginine 32, and lysine 105. Sn-glycerol 3-phosphate-binding residues include lysine 105, glycine 133, and serine 135. An NADPH-binding site is contributed by alanine 137. Sn-glycerol 3-phosphate is bound by residues lysine 188, aspartate 241, serine 251, arginine 252, and asparagine 253. Lysine 188 (proton acceptor) is an active-site residue. Arginine 252 provides a ligand contact to NADPH. Glutamate 278 serves as a coordination point for NADPH.

This sequence belongs to the NAD-dependent glycerol-3-phosphate dehydrogenase family.

The protein localises to the cytoplasm. The catalysed reaction is sn-glycerol 3-phosphate + NAD(+) = dihydroxyacetone phosphate + NADH + H(+). The enzyme catalyses sn-glycerol 3-phosphate + NADP(+) = dihydroxyacetone phosphate + NADPH + H(+). Its pathway is membrane lipid metabolism; glycerophospholipid metabolism. Its function is as follows. Catalyzes the reduction of the glycolytic intermediate dihydroxyacetone phosphate (DHAP) to sn-glycerol 3-phosphate (G3P), the key precursor for phospholipid synthesis. This is Glycerol-3-phosphate dehydrogenase [NAD(P)+] from Acidithiobacillus ferrooxidans (strain ATCC 23270 / DSM 14882 / CIP 104768 / NCIMB 8455) (Ferrobacillus ferrooxidans (strain ATCC 23270)).